A 600-amino-acid polypeptide reads, in one-letter code: UvrABC system protein C (600 aa).

Positions 15 to 100 (NSTGVYQYFN…IKQLHPKYNI (86 aa)) constitute a GIY-YIG domain. In terms of domain architecture, UVR spans 203-238 (SVLLKNLEKQMLVLAQNENYEEAAKVRDQIAMIKDL).

Belongs to the UvrC family. Interacts with UvrB in an incision complex.

It is found in the cytoplasm. The UvrABC repair system catalyzes the recognition and processing of DNA lesions. UvrC both incises the 5' and 3' sides of the lesion. The N-terminal half is responsible for the 3' incision and the C-terminal half is responsible for the 5' incision. The polypeptide is UvrABC system protein C (Campylobacter jejuni subsp. jejuni serotype O:2 (strain ATCC 700819 / NCTC 11168)).